Here is a 208-residue protein sequence, read N- to C-terminus: Holliday junction branch migration complex subunit RuvA (208 aa).

Residues 1–63 (MIGMLTGRVE…QDAITLHGFL (63 aa)) are domain I. Residues 64–142 (DRDAKKTFLQ…LSQIEGASAQ (79 aa)) form a domain II region. The tract at residues 143–151 (AATSKSPVD) is flexible linker. The tract at residues 151 to 208 (DTGTEQVVEGLISLGWRQQDAQQAVAEACAENDIPTPLATDDVPRVLRLALALMDRGR) is domain III.

The protein belongs to the RuvA family. As to quaternary structure, homotetramer. Forms an RuvA(8)-RuvB(12)-Holliday junction (HJ) complex. HJ DNA is sandwiched between 2 RuvA tetramers; dsDNA enters through RuvA and exits via RuvB. An RuvB hexamer assembles on each DNA strand where it exits the tetramer. Each RuvB hexamer is contacted by two RuvA subunits (via domain III) on 2 adjacent RuvB subunits; this complex drives branch migration. In the full resolvosome a probable DNA-RuvA(4)-RuvB(12)-RuvC(2) complex forms which resolves the HJ.

It localises to the cytoplasm. Functionally, the RuvA-RuvB-RuvC complex processes Holliday junction (HJ) DNA during genetic recombination and DNA repair, while the RuvA-RuvB complex plays an important role in the rescue of blocked DNA replication forks via replication fork reversal (RFR). RuvA specifically binds to HJ cruciform DNA, conferring on it an open structure. The RuvB hexamer acts as an ATP-dependent pump, pulling dsDNA into and through the RuvAB complex. HJ branch migration allows RuvC to scan DNA until it finds its consensus sequence, where it cleaves and resolves the cruciform DNA. This chain is Holliday junction branch migration complex subunit RuvA, found in Bifidobacterium longum (strain DJO10A).